Reading from the N-terminus, the 176-residue chain is Beta-carotene hydroxylase (176 aa).

In terms of domain architecture, Fatty acid hydroxylase spans 10-126; it reads LSVIAMEGIA…AHRLHHAVRG (117 aa). Residues 152–176 are disordered; it reads HGRPPKRDAAKDRPDAASPSSSSPE. The segment covering 156–166 has biased composition (basic and acidic residues); it reads PKRDAAKDRPD. Residues 167 to 176 are compositionally biased toward low complexity; the sequence is AASPSSSSPE.

It belongs to the sterol desaturase family.

It participates in carotenoid biosynthesis; zeaxanthin biosynthesis. Its function is as follows. Catalyzes the hydroxylation reaction from beta-carotene to zeaxanthin. This Pseudescherichia vulneris (Escherichia vulneris) protein is Beta-carotene hydroxylase (crtZ).